A 349-amino-acid polypeptide reads, in one-letter code: MLFAALRDMQWRKRRLVITIISTGLIFGMTLVLTGLANGFRVEARHTVDSMGVDVFVVRSGAAGPFLGSIPFPDVDLARVAAEPGVMAAAPLGSVGTIMKEGTSTRNVTVFGAPEHGPGMPRVSEGRSPSKPDEVAASSTMGRHLGDTVEVGARRLRVVGIVPNSTALAKIPNVFLTTEGLQKLAYNGQPNITSIGIIGMPRQLPEGYQTFDRVGAVNDLVRPLKVAVNSISIVAVLLWIVAVLIVGSVVYLSALERLRDFAVFKAIGTPTRSIMAGLALQALVIALLAAVVGVVLAQVLAPLFPMIVAVPVGAYLALPVAAIVIGLFASVAGLKRVVTVDPAQAFGGP.

A helical membrane pass occupies residues 16–36 (LVITIISTGLIFGMTLVLTGL). The tract at residues 111–139 (FGAPEHGPGMPRVSEGRSPSKPDEVAASS) is disordered. Over residues 124-134 (SEGRSPSKPDE) the composition is skewed to basic and acidic residues. 3 helical membrane passes run 231-251 (ISIVAVLLWIVAVLIVGSVVY), 284-304 (VIALLAAVVGVVLAQVLAPLF), and 307-327 (IVAVPVGAYLALPVAAIVIGL).

The protein belongs to the ABC-4 integral membrane protein family. The complex is composed of two ATP-binding proteins (MT0079), two transmembrane proteins (MT0078) and a solute-binding protein.

It localises to the cell membrane. Its function is as follows. Probably part of an ABC transporter complex. Probably responsible for the translocation of the substrate across the membrane. This is an uncharacterized protein from Mycobacterium tuberculosis (strain CDC 1551 / Oshkosh).